Reading from the N-terminus, the 312-residue chain is Epoxyqueuosine reductase (312 aa).

The Proton donor role is filled by D132. Residues 174 to 206 (EVLEADKPSKPICGECEKCIEACPTKAIEEPFI) form the 4Fe-4S ferredoxin-type 1 domain. Positions 186, 189, 192, 196, 212, 240, 243, and 247 each coordinate [4Fe-4S] cluster. Positions 226–257 (PENIINKMGNWIAGCDICQDVCPWNQKHIPST) constitute a 4Fe-4S ferredoxin-type 2 domain.

It belongs to the QueG family. Monomer. Cob(II)alamin serves as cofactor. The cofactor is [4Fe-4S] cluster.

The protein resides in the cytoplasm. The catalysed reaction is epoxyqueuosine(34) in tRNA + AH2 = queuosine(34) in tRNA + A + H2O. It functions in the pathway tRNA modification; tRNA-queuosine biosynthesis. Catalyzes the conversion of epoxyqueuosine (oQ) to queuosine (Q), which is a hypermodified base found in the wobble positions of tRNA(Asp), tRNA(Asn), tRNA(His) and tRNA(Tyr). The protein is Epoxyqueuosine reductase of Prochlorococcus marinus (strain NATL2A).